The following is a 260-amino-acid chain: Flavin-dependent thymidylate synthase (260 aa).

The 202-residue stretch at 1-202 (MKIKLVSYSK…PRLFKYAGPN (202 aa)) folds into the ThyX domain. FAD is bound by residues S55, 79 to 81 (RHR), and Q87. DUMP-binding positions include 76–79 (QLVR), 87–91 (QMSHR), and R141. Positions 79–89 (RHRIASYTQMS) match the ThyX motif motif. Residues 157–159 (NAR) and N163 contribute to the FAD site. Position 168 (R168) interacts with dUMP. The active-site Involved in ionization of N3 of dUMP, leading to its activation is the R168.

It belongs to the thymidylate synthase ThyX family. In terms of assembly, homotetramer. FAD serves as cofactor.

It carries out the reaction dUMP + (6R)-5,10-methylene-5,6,7,8-tetrahydrofolate + NADPH + H(+) = dTMP + (6S)-5,6,7,8-tetrahydrofolate + NADP(+). The protein operates within pyrimidine metabolism; dTTP biosynthesis. Catalyzes the reductive methylation of 2'-deoxyuridine-5'-monophosphate (dUMP) to 2'-deoxythymidine-5'-monophosphate (dTMP) while utilizing 5,10-methylenetetrahydrofolate (mTHF) as the methyl donor, and NADPH and FADH(2) as the reductant. The sequence is that of Flavin-dependent thymidylate synthase from Sulfolobus acidocaldarius (strain ATCC 33909 / DSM 639 / JCM 8929 / NBRC 15157 / NCIMB 11770).